The sequence spans 201 residues: Large ribosomal subunit protein uL4 (201 aa).

Positions Arg-44 to Ala-68 are disordered.

The protein belongs to the universal ribosomal protein uL4 family. Part of the 50S ribosomal subunit.

Its function is as follows. One of the primary rRNA binding proteins, this protein initially binds near the 5'-end of the 23S rRNA. It is important during the early stages of 50S assembly. It makes multiple contacts with different domains of the 23S rRNA in the assembled 50S subunit and ribosome. Forms part of the polypeptide exit tunnel. The polypeptide is Large ribosomal subunit protein uL4 (Buchnera aphidicola subsp. Acyrthosiphon pisum (strain 5A)).